The sequence spans 296 residues: MYLSLLKSLNRLHPRAWDFLQLARMDKPIGIYLLLWPTLVALWIAAEGQPSLSHVLIFTFGVVLTRAGGCAINDFADRKVDGQVKRTDQRPLATGKVSAKEALILFAVLMGAAFLLVLCTNATTVWLSFGALALAACYPFMKRYTYYPQVVLGAAYSWGILMTFTAQNGELPATAWLLYIANLLWTVGYDTYYAMTDRDDDLKIGVKSTAILFGDADRVIILTLQGLSLGCLLLAGARFNLGGWFHLGLAVAAACFAWEFWYTRDRDRMKCFKAFLHNHWAGLAIFVGVVLDYALR.

8 helical membrane-spanning segments follow: residues 28–48 (PIGIYLLLWPTLVALWIAAEG), 52–72 (LSHVLIFTFGVVLTRAGGCAI), 102–122 (ALILFAVLMGAAFLLVLCTNA), 146–166 (YYPQVVLGAAYSWGILMTFTA), 169–189 (GELPATAWLLYIANLLWTVGY), 219–239 (VIILTLQGLSLGCLLLAGARF), 241–261 (LGGWFHLGLAVAAACFAWEFW), and 275–295 (FLHNHWAGLAIFVGVVLDYAL).

This sequence belongs to the UbiA prenyltransferase family. Mg(2+) is required as a cofactor.

It is found in the cell inner membrane. It carries out the reaction all-trans-octaprenyl diphosphate + 4-hydroxybenzoate = 4-hydroxy-3-(all-trans-octaprenyl)benzoate + diphosphate. It participates in cofactor biosynthesis; ubiquinone biosynthesis. Catalyzes the prenylation of para-hydroxybenzoate (PHB) with an all-trans polyprenyl group. Mediates the second step in the final reaction sequence of ubiquinone-8 (UQ-8) biosynthesis, which is the condensation of the polyisoprenoid side chain with PHB, generating the first membrane-bound Q intermediate 3-octaprenyl-4-hydroxybenzoate. In Pseudomonas fluorescens (strain ATCC BAA-477 / NRRL B-23932 / Pf-5), this protein is 4-hydroxybenzoate octaprenyltransferase.